We begin with the raw amino-acid sequence, 68 residues long: U4-agatoxin-Ao1a (68 aa).

A signal peptide spans 1–25 (MKKSTVIVLSLAAFVLLSVMQFSAA). A propeptide spanning residues 26 to 36 (EDIKMEVEEQR) is cleaved from the precursor. Disulfide bonds link C39–C52, C46–C57, C51–C66, and C59–C64.

The protein belongs to the neurotoxin 33 family. In terms of tissue distribution, expressed by the venom gland.

The protein resides in the secreted. The protein is U4-agatoxin-Ao1a of Agelena orientalis (Funnel-web spider).